A 274-amino-acid polypeptide reads, in one-letter code: Sulfur carrier protein FdhD (274 aa).

Residue C121 is the Cysteine persulfide intermediate of the active site. Residue 258–263 coordinates Mo-bis(molybdopterin guanine dinucleotide); sequence FSKPGR.

The protein belongs to the FdhD family.

The protein resides in the cytoplasm. Its function is as follows. Required for formate dehydrogenase (FDH) activity. Acts as a sulfur carrier protein that transfers sulfur from IscS to the molybdenum cofactor prior to its insertion into FDH. The polypeptide is Sulfur carrier protein FdhD (Yersinia pseudotuberculosis serotype O:3 (strain YPIII)).